We begin with the raw amino-acid sequence, 684 residues long: Leishmanolysin-like peptidase (684 aa).

His257 contacts Zn(2+). Glu258 is a catalytic residue. Positions 261 and 364 each coordinate Zn(2+).

Belongs to the peptidase M8 family. It depends on Zn(2+) as a cofactor.

The protein localises to the cytoplasm. In terms of biological role, essential for the coordination of mitotic progression, and also plays a role in cell migration. This Drosophila pseudoobscura pseudoobscura (Fruit fly) protein is Leishmanolysin-like peptidase.